Here is a 270-residue protein sequence, read N- to C-terminus: Putative hydro-lyase Noca_0093 (270 aa).

This sequence belongs to the D-glutamate cyclase family.

This is Putative hydro-lyase Noca_0093 from Nocardioides sp. (strain ATCC BAA-499 / JS614).